The sequence spans 491 residues: Sterol 14-alpha demethylase (491 aa).

Residues 20–40 (LWMLSTVALLSILVVSVVINV) form a helical membrane-spanning segment. A heme-binding site is contributed by Cys430.

The protein belongs to the cytochrome P450 family. It depends on heme as a cofactor.

Its subcellular location is the endoplasmic reticulum membrane. The enzyme catalyses a 14alpha-methyl steroid + 3 reduced [NADPH--hemoprotein reductase] + 3 O2 = a Delta(14) steroid + formate + 3 oxidized [NADPH--hemoprotein reductase] + 4 H2O + 4 H(+). It catalyses the reaction a 14alpha-methyl steroid + reduced [NADPH--hemoprotein reductase] + O2 = a 14alpha-hydroxymethyl steroid + oxidized [NADPH--hemoprotein reductase] + H2O + H(+). The catalysed reaction is a 14alpha-hydroxymethyl steroid + reduced [NADPH--hemoprotein reductase] + O2 = a 14alpha-formyl steroid + oxidized [NADPH--hemoprotein reductase] + 2 H2O + H(+). It carries out the reaction a 14alpha-formyl steroid + reduced [NADPH--hemoprotein reductase] + O2 = a Delta(14) steroid + formate + oxidized [NADPH--hemoprotein reductase] + H2O + 2 H(+). The enzyme catalyses lanosterol + 3 reduced [NADPH--hemoprotein reductase] + 3 O2 = 4,4-dimethyl-5alpha-cholesta-8,14,24-trien-3beta-ol + formate + 3 oxidized [NADPH--hemoprotein reductase] + 4 H2O + 4 H(+). It catalyses the reaction lanosterol + reduced [NADPH--hemoprotein reductase] + O2 = 32-hydroxylanosterol + oxidized [NADPH--hemoprotein reductase] + H2O + H(+). The catalysed reaction is 32-hydroxylanosterol + reduced [NADPH--hemoprotein reductase] + O2 = 32-oxolanosterol + oxidized [NADPH--hemoprotein reductase] + 2 H2O + H(+). It carries out the reaction 32-oxolanosterol + reduced [NADPH--hemoprotein reductase] + O2 = 4,4-dimethyl-5alpha-cholesta-8,14,24-trien-3beta-ol + formate + oxidized [NADPH--hemoprotein reductase] + H2O + 2 H(+). The enzyme catalyses eburicol + 3 reduced [NADPH--hemoprotein reductase] + 3 O2 = 14-demethyleburicol + formate + 3 oxidized [NADPH--hemoprotein reductase] + 4 H2O + 4 H(+). It catalyses the reaction eburicol + reduced [NADPH--hemoprotein reductase] + O2 = 32-hydroxyeburicol + oxidized [NADPH--hemoprotein reductase] + H2O + H(+). The catalysed reaction is 32-hydroxyeburicol + reduced [NADPH--hemoprotein reductase] + O2 = 32-oxoeburicol + oxidized [NADPH--hemoprotein reductase] + 2 H2O + H(+). It carries out the reaction 32-oxoeburicol + reduced [NADPH--hemoprotein reductase] + O2 = 14-demethyleburicol + formate + oxidized [NADPH--hemoprotein reductase] + H2O + 2 H(+). It functions in the pathway steroid biosynthesis; sterol biosynthesis. Its function is as follows. Sterol 14alpha-demethylase, encoded by cyp51A, cyp51B and cyp51C, that plays a critical role in the third module of ergosterol biosynthesis pathway, being ergosterol the major sterol component in fungal membranes that participates in a variety of functions. The third module or late pathway involves the ergosterol synthesis itself through consecutive reactions that mainly occur in the endoplasmic reticulum (ER) membrane. In filamentous fungi, during the initial step of this module, lanosterol (lanosta-8,24-dien-3beta-ol) can be metabolized to eburicol. Sterol 14alpha-demethylase catalyzes the three-step oxidative removal of the 14alpha-methyl group (C-32) of both these sterols in the form of formate, and converts eburicol and lanosterol to 14-demethyleburicol (4,4,24-trimethylergosta-8,14,24(28)-trienol) and 4,4-dimethyl-5alpha-cholesta-8,14,24-trien-3beta-ol, respectively, which are further metabolized by other enzymes in the pathway to ergosterol. Can also use substrates not intrinsic to fungi, such as 24,25-dihydrolanosterol (DHL), producing 4,4'-dimethyl-8,14-cholestadien-3-beta-ol, but at lower rates than the endogenous substrates. In terms of biological role, as a target of azole drugs, plays a crucial role in azole susceptibility. The sequence is that of Sterol 14-alpha demethylase from Aspergillus flavus (strain ATCC 200026 / FGSC A1120 / IAM 13836 / NRRL 3357 / JCM 12722 / SRRC 167).